The following is a 508-amino-acid chain: DDB1- and CUL4-associated factor 10 (508 aa).

The interval methionine 1 to glycine 75 is disordered. Residues serine 7–leucine 17 show a composition bias toward basic and acidic residues. Positions arginine 18–glutamate 32 are enriched in acidic residues. Over residues glycine 63–glycine 75 the composition is skewed to gly residues. WD repeat units follow at residues glutamine 126–threonine 165, alanine 169–cysteine 207, glycine 211–cysteine 250, and phenylalanine 256–glutamate 295. The tract at residues proline 307–serine 343 is disordered. A compositionally biased stretch (basic and acidic residues) spans histidine 325 to leucine 338. WD repeat units lie at residues aspartate 356–alanine 396, valine 419–valine 457, and serine 475–phenylalanine 508.

This sequence belongs to the WD repeat DCAF10 family.

It functions in the pathway protein modification; protein ubiquitination. Its function is as follows. May function as a substrate receptor for CUL4-DDB1 E3 ubiquitin-protein ligase complex. The sequence is that of DDB1- and CUL4-associated factor 10 (dcaf10) from Danio rerio (Zebrafish).